Consider the following 220-residue polypeptide: Pyridoxine/pyridoxamine 5'-phosphate oxidase (220 aa).

Substrate is bound by residues 13-16 (RVEY) and lysine 77. Residues 72–77 (RTVLCK), 87–88 (FT), lysine 94, and glutamine 116 contribute to the FMN site. Substrate contacts are provided by tyrosine 134, arginine 138, and serine 142. FMN-binding positions include 151-152 (QS) and tryptophan 197. 203-205 (RLH) contacts substrate. Arginine 207 lines the FMN pocket.

This sequence belongs to the pyridoxamine 5'-phosphate oxidase family. As to quaternary structure, homodimer. FMN serves as cofactor.

The catalysed reaction is pyridoxamine 5'-phosphate + O2 + H2O = pyridoxal 5'-phosphate + H2O2 + NH4(+). It carries out the reaction pyridoxine 5'-phosphate + O2 = pyridoxal 5'-phosphate + H2O2. Its pathway is cofactor metabolism; pyridoxal 5'-phosphate salvage; pyridoxal 5'-phosphate from pyridoxamine 5'-phosphate: step 1/1. The protein operates within cofactor metabolism; pyridoxal 5'-phosphate salvage; pyridoxal 5'-phosphate from pyridoxine 5'-phosphate: step 1/1. Functionally, catalyzes the oxidation of either pyridoxine 5'-phosphate (PNP) or pyridoxamine 5'-phosphate (PMP) into pyridoxal 5'-phosphate (PLP). This chain is Pyridoxine/pyridoxamine 5'-phosphate oxidase, found in Mycolicibacterium paratuberculosis (strain ATCC BAA-968 / K-10) (Mycobacterium paratuberculosis).